A 242-amino-acid chain; its full sequence is Octanoyltransferase (242 aa).

Positions 31–206 (SQTTDEIWFL…LFLKNFGYNQ (176 aa)) constitute a BPL/LPL catalytic domain. Residues 70-77 (RGGQVTYH), 137-139 (SIG), and 150-152 (GLA) each bind substrate. Residue Cys-168 is the Acyl-thioester intermediate of the active site.

The protein belongs to the LipB family.

It localises to the cytoplasm. The catalysed reaction is octanoyl-[ACP] + L-lysyl-[protein] = N(6)-octanoyl-L-lysyl-[protein] + holo-[ACP] + H(+). The protein operates within protein modification; protein lipoylation via endogenous pathway; protein N(6)-(lipoyl)lysine from octanoyl-[acyl-carrier-protein]: step 1/2. Functionally, catalyzes the transfer of endogenously produced octanoic acid from octanoyl-acyl-carrier-protein onto the lipoyl domains of lipoate-dependent enzymes. Lipoyl-ACP can also act as a substrate although octanoyl-ACP is likely to be the physiological substrate. In Coxiella burnetii (strain RSA 493 / Nine Mile phase I), this protein is Octanoyltransferase.